Reading from the N-terminus, the 261-residue chain is MLKKRLIPKLQFSIKPSYRGPKPVLVITRQFDSKRAIGDPVSQAKIYEAQLADELVLVDLEGTSDSWPILLDTLSNMSESLATPLSVGGGITSFEQVQQLLDRGADKVVLNSGAVNNPQLIDLVANSYGSQCVVISIDIRKESDLSRHVYIDGGSTATDWSLFSWANDCASRGAGELLITSIDNDGTGTGLDLDSIRQLRYEVNLPLIASGGCGLAQHFVAGYEVGASAVAAGTFFSQRDQNPMQCRSHIRNAGLPIRLEQ.

Residue aspartate 138 is part of the active site.

The protein belongs to the HisA/HisF family. As to quaternary structure, heterodimer of HisH and HisF.

The protein resides in the cytoplasm. It catalyses the reaction 5-[(5-phospho-1-deoxy-D-ribulos-1-ylimino)methylamino]-1-(5-phospho-beta-D-ribosyl)imidazole-4-carboxamide + L-glutamine = D-erythro-1-(imidazol-4-yl)glycerol 3-phosphate + 5-amino-1-(5-phospho-beta-D-ribosyl)imidazole-4-carboxamide + L-glutamate + H(+). It functions in the pathway amino-acid biosynthesis; L-histidine biosynthesis; L-histidine from 5-phospho-alpha-D-ribose 1-diphosphate: step 5/9. Functionally, IGPS catalyzes the conversion of PRFAR and glutamine to IGP, AICAR and glutamate. The HisF subunit catalyzes the cyclization activity that produces IGP and AICAR from PRFAR using the ammonia provided by the HisH subunit. The sequence is that of Putative imidazole glycerol phosphate synthase subunit hisF2 (hisF2) from Prochlorococcus marinus (strain MIT 9313).